The primary structure comprises 87 residues: Small ribosomal subunit protein bS20 (87 aa).

The segment at 1-22 (MANIKSQIKRIGTNKKAQERNK) is disordered.

It belongs to the bacterial ribosomal protein bS20 family.

In terms of biological role, binds directly to 16S ribosomal RNA. The sequence is that of Small ribosomal subunit protein bS20 from Clavibacter sepedonicus (Clavibacter michiganensis subsp. sepedonicus).